The primary structure comprises 959 residues: Translation initiation factor IF-2 (959 aa).

The span at 1–10 (MSDKTNDDKT) shows a compositional bias: basic and acidic residues. The interval 1-374 (MSDKTNDDKT…SQMQETREKI (374 aa)) is disordered. Over residues 27–37 (EQSTVRQNFSH) the composition is skewed to polar residues. Low complexity-rich tracts occupy residues 63 to 118 (AAAA…VTKP) and 128 to 138 (QRPGGQQAQRP). Basic and acidic residues-rich tracts occupy residues 154 to 225 (SEMD…EAAK) and 232 to 241 (ARSERRDDAR). Residues 246 to 284 (GARPQQAGRPQGGRPQPAGRPQQGSPRPAPIIADAAPIA) show a composition bias toward low complexity. The span at 318–333 (PEVRAPKVVKGEDDRR) shows a compositional bias: basic and acidic residues. The region spanning 457 to 626 (SRPPVVTIMG…LLQAEMLDLK (170 aa)) is the tr-type G domain. A G1 region spans residues 466–473 (GHVDHGKT). Residue 466 to 473 (GHVDHGKT) coordinates GTP. Positions 491-495 (GITQH) are G2. A G3 region spans residues 512 to 515 (DTPG). Residues 512 to 516 (DTPGH) and 566 to 569 (NKID) contribute to the GTP site. The segment at 566–569 (NKID) is G4. The segment at 602-604 (SAK) is G5.

This sequence belongs to the TRAFAC class translation factor GTPase superfamily. Classic translation factor GTPase family. IF-2 subfamily.

The protein resides in the cytoplasm. In terms of biological role, one of the essential components for the initiation of protein synthesis. Protects formylmethionyl-tRNA from spontaneous hydrolysis and promotes its binding to the 30S ribosomal subunits. Also involved in the hydrolysis of GTP during the formation of the 70S ribosomal complex. This chain is Translation initiation factor IF-2, found in Brucella abortus (strain 2308).